A 507-amino-acid chain; its full sequence is Myocyte-specific enhancer factor 2A (507 aa).

An MADS-box domain is found at 3–57; that stretch reads RKKIQITRIMDERNRQVTFTKRKFGLMKKAYELSVLCDCEIALIIFNSSNKLFQY. Lys-30 is subject to Phosphoserine. A DNA-binding region (mef2-type) is located at residues 58–86; it reads ASTDMDKVLLKYTEYNEPHESRTNSDIVE. Position 59 is a phosphoserine; by CK2 (Ser-59). Residue Ser-98 is modified to Phosphoserine. Low complexity predominate over residues 173–183; the sequence is TLTDSSMLSPP. The interval 173–229 is disordered; sequence TLTDSSMLSPPQTTLHRNVSPGAPQRPPSTGNAGGMLSTTDLTVPNGAGSSPVGNGF. The segment covering 209-229 has biased composition (polar residues); that stretch reads LSTTDLTVPNGAGSSPVGNGF. At Ser-235 the chain carries Phosphoserine. A disordered region spans residues 243-270; the sequence is GANSLGKVMPTKSPPPPGGGNLGMNSRK. Position 249 is an N6-acetyllysine (Lys-249). Residue Ser-255 is modified to Phosphoserine; by MAPK14. Residues 266-283 are required for interaction with MAPKs; sequence MNSRKPDLRVVIPPSSKG. The beta domain stretch occupies residues 289 to 296; the sequence is SEEEELEL. Phosphothreonine; by MAPK7 and MAPK14 is present on residues Thr-312 and Thr-319. Thr-312 is modified (phosphothreonine; by NLK). The residue at position 355 (Ser-355) is a Phosphoserine; by MAPK7. The segment at 397-507 is disordered; sequence NQNISIKSEP…KRMRMDAWVT (111 aa). Lys-403 is modified (N6-acetyllysine; alternate). Lys-403 participates in a covalent cross-link: Glycyl lysine isopeptide (Lys-Gly) (interchain with G-Cter in SUMO); alternate. Ser-408 is subject to Phosphoserine; by CDK5. Thr-415 bears the Phosphothreonine mark. Residues 420–429 are compositionally biased toward low complexity; that stretch reads QQQQQQQQQQ. Positions 430 to 445 are enriched in pro residues; it reads QPPPPPQPQPQPPQPQ. Phosphoserine; by MAPK is present on Ser-453. Over residues 453–466 the composition is skewed to low complexity; that stretch reads SPVDSLSSSSSSYD. Composition is skewed to basic and acidic residues over residues 467–477 and 488–507; these read GSDREDPRGDF and NTED…AWVT.

It belongs to the MEF2 family. In terms of assembly, binds DNA as a homo- or heterodimer. Dimerizes with MEF2D. Interacts with HDAC7. Interacts with PIAS1; the interaction enhances sumoylation. Interacts with HDAC4, HDAC9 and SLC2A4RG. Interacts (via the N-terminal) with MAPK7; the interaction results in the phosphorylation and transcriptional activity of MEF2A. In terms of processing, constitutive phosphorylation on Ser-408 promotes Lys-403 sumoylation thus preventing acetylation at this site. Dephosphorylation on Ser-408 by PPP3CA upon neuron depolarization promotes a switch from sumoylation to acetylation on residue Lys-403 leading to inhibition of dendrite claw differentiation. Phosphorylation on Thr-312 and Thr-319 are the main sites involved in p38 MAPK signaling and activate transcription. Phosphorylated on these sites by MAPK14/p38alpha and MAPK11/p38beta, but not by MAPK13/p38delta nor by MAPK12/p38gamma. Phosphorylation on Ser-408 by CDK5 induced by neurotoxicity inhibits MEF2A transcriptional activation leading to apoptosis of cortical neurons. Phosphorylation on Thr-312, Thr-319 and Ser-355 can be induced by EGF. Post-translationally, sumoylation on Lys-403 is enhanced by PIAS1 and represses transcriptional activity. Phosphorylation on Ser-408 is required for sumoylation. Has no effect on nuclear location nor on DNA binding. Sumoylated with SUMO1 and, to a lesser extent with SUMO2 and SUMO3. PIASx facilitates sumoylation in postsynaptic dendrites in the cerebellar cortex and promotes their morphogenesis. Acetylation on Lys-403 activates transcriptional activity. Acetylated by p300 on several sites in diffentiating myocytes. Acetylation on Lys-4 increases DNA binding and transactivation. Hyperacetylation by p300 leads to enhanced cardiac myocyte growth and heart failure. In terms of processing, proteolytically cleaved in cerebellar granule neurons on several sites by caspase 3 and caspase 7 following neurotoxicity. Preferentially cleaves the CDK5-mediated hyperphosphorylated form which leads to neuron apoptosis and transcriptional inactivation. Isoform MEF2 and isoform MEFA are expressed only in skeletal and cardiac muscle and in the brain. Isoform RSRFC4 and isoform RSRFC9 are expressed in all tissues examined.

The protein resides in the nucleus. Its function is as follows. Transcriptional activator which binds specifically to the MEF2 element, 5'-YTA[AT](4)TAR-3', found in numerous muscle-specific genes. Also involved in the activation of numerous growth factor- and stress-induced genes. Mediates cellular functions not only in skeletal and cardiac muscle development, but also in neuronal differentiation and survival. Plays diverse roles in the control of cell growth, survival and apoptosis via p38 MAPK signaling in muscle-specific and/or growth factor-related transcription. In cerebellar granule neurons, phosphorylated and sumoylated MEF2A represses transcription of NUR77 promoting synaptic differentiation. Associates with chromatin to the ZNF16 promoter. The protein is Myocyte-specific enhancer factor 2A (MEF2A) of Homo sapiens (Human).